The primary structure comprises 352 residues: MSQTLTVPTLTLENGTTLRDVPVAYRTWGTLNATGTNAVLVCHALTGDTNVADWWGGLLGPGRALDPTEDFVVCLNVPGSPYGSVAPVTVNPDTGERYGAGFPPFTTRDTVRLHRRALETLGVQRVACAVGGSMGGMHVLEWAFEATDDGAPFVRSLVPIAVGGRHTAWQIGWGAAQRQAIFADPKWRDGTYPPDDPPTNGLATARMMAMVSYRSRPSLDGRFGRDAMPEQDGTPYAVESYLHHHGNKLVDRFDANCYVALTRQMDTHDVARGRGDYAKVLRAIEQPSLVVGIDSDVLYPLSEQEELAEHLPSATLEVLSAPHGHDTFLIELDALNDLVSTWRANICSSVAA.

In terms of domain architecture, AB hydrolase-1 spans 37 to 330 (NAVLVCHALT…APHGHDTFLI (294 aa)). Residue Ser133 is the Nucleophile of the active site. Arg206 is a substrate binding site. Residues Asp296 and His325 contribute to the active site. Position 326 (Asp326) interacts with substrate.

This sequence belongs to the AB hydrolase superfamily. MetX family. As to quaternary structure, homodimer.

The protein resides in the cytoplasm. The enzyme catalyses L-homoserine + acetyl-CoA = O-acetyl-L-homoserine + CoA. Its pathway is amino-acid biosynthesis; L-methionine biosynthesis via de novo pathway; O-acetyl-L-homoserine from L-homoserine: step 1/1. Transfers an acetyl group from acetyl-CoA to L-homoserine, forming acetyl-L-homoserine. The protein is Homoserine O-acetyltransferase of Salinibacter ruber (strain DSM 13855 / M31).